Consider the following 274-residue polypeptide: ATP synthase subunit delta (274 aa).

It belongs to the ATPase delta chain family. In terms of assembly, F-type ATPases have 2 components, F(1) - the catalytic core - and F(0) - the membrane proton channel. F(1) has five subunits: alpha(3), beta(3), gamma(1), delta(1), epsilon(1). F(0) has three main subunits: a(1), b(2) and c(10-14). The alpha and beta chains form an alternating ring which encloses part of the gamma chain. F(1) is attached to F(0) by a central stalk formed by the gamma and epsilon chains, while a peripheral stalk is formed by the delta and b chains.

It localises to the cell membrane. Functionally, f(1)F(0) ATP synthase produces ATP from ADP in the presence of a proton or sodium gradient. F-type ATPases consist of two structural domains, F(1) containing the extramembraneous catalytic core and F(0) containing the membrane proton channel, linked together by a central stalk and a peripheral stalk. During catalysis, ATP synthesis in the catalytic domain of F(1) is coupled via a rotary mechanism of the central stalk subunits to proton translocation. This protein is part of the stalk that links CF(0) to CF(1). It either transmits conformational changes from CF(0) to CF(1) or is implicated in proton conduction. This chain is ATP synthase subunit delta, found in Acidothermus cellulolyticus (strain ATCC 43068 / DSM 8971 / 11B).